Consider the following 481-residue polypeptide: MSVDARTAYPGSRPPANMQDESDVEEEALVNNYKEQVHFDDGMSELDRTTSLGAASQTQGLQAQLAAAATPLEFQATLETKFASYDNYCSLFHYILNSDGPVDLEVPSYYWAWDVIDEFIYQFESFCRYRNRVARTGSNEEEAQLLRENPNTWGCYSVLNVLYSLIQRSQINEQLAAIKANEDPMAVAGDYGSRPLYRMLGYFSIIGLLRVHCLLGDFSLALKTLDDIEMNKKAMFARVMAAHFTTYYYVGFSYMMMRRYADAIRTFSHILVYVSRTKNFQKGRESYDAIAKKNDQILALIAICVSFHPTRLDDTIHSGLREKYGDQFIRLQRGGPDALPLYEELFRSACPKFISPTPPDFDNPALNIDPVDHHTAVFMDEVRNTLYNPTVKSYLKLYTTMDLKKLAGFLEVEPEQLRSWLLVNKLRSRQVRWSEGGLLEGEIVNSSDLDYAIEGNLIHISETKAGRRLVDWYLRNLARTY.

The segment at 1–22 (MSVDARTAYPGSRPPANMQDES) is disordered. Positions 262-457 (DAIRTFSHIL…DLDYAIEGNL (196 aa)) constitute a PCI domain.

The protein belongs to the eIF-3 subunit L family. As to quaternary structure, component of the eukaryotic translation initiation factor 3 (eIF-3) complex.

It localises to the cytoplasm. Functionally, component of the eukaryotic translation initiation factor 3 (eIF-3) complex, which is involved in protein synthesis of a specialized repertoire of mRNAs and, together with other initiation factors, stimulates binding of mRNA and methionyl-tRNAi to the 40S ribosome. The eIF-3 complex specifically targets and initiates translation of a subset of mRNAs involved in cell proliferation. The protein is Eukaryotic translation initiation factor 3 subunit L of Coccidioides immitis (strain RS) (Valley fever fungus).